Reading from the N-terminus, the 160-residue chain is Cytochrome b6-f complex subunit 4 (160 aa).

The next 3 helical transmembrane spans lie at 36-56 (LLYI…GLAV), 95-115 (LLGI…PFIE), and 128-148 (IAMA…IGAC).

The protein belongs to the cytochrome b family. PetD subfamily. As to quaternary structure, the 4 large subunits of the cytochrome b6-f complex are cytochrome b6, subunit IV (17 kDa polypeptide, PetD), cytochrome f and the Rieske protein, while the 4 small subunits are PetG, PetL, PetM and PetN. The complex functions as a dimer.

The protein localises to the cellular thylakoid membrane. In terms of biological role, component of the cytochrome b6-f complex, which mediates electron transfer between photosystem II (PSII) and photosystem I (PSI), cyclic electron flow around PSI, and state transitions. In Prochlorococcus marinus (strain MIT 9303), this protein is Cytochrome b6-f complex subunit 4.